A 94-amino-acid polypeptide reads, in one-letter code: Pyrimidine/purine nucleoside phosphorylase (94 aa).

This sequence belongs to the nucleoside phosphorylase PpnP family.

It carries out the reaction a purine D-ribonucleoside + phosphate = a purine nucleobase + alpha-D-ribose 1-phosphate. The enzyme catalyses adenosine + phosphate = alpha-D-ribose 1-phosphate + adenine. The catalysed reaction is cytidine + phosphate = cytosine + alpha-D-ribose 1-phosphate. It catalyses the reaction guanosine + phosphate = alpha-D-ribose 1-phosphate + guanine. It carries out the reaction inosine + phosphate = alpha-D-ribose 1-phosphate + hypoxanthine. The enzyme catalyses thymidine + phosphate = 2-deoxy-alpha-D-ribose 1-phosphate + thymine. The catalysed reaction is uridine + phosphate = alpha-D-ribose 1-phosphate + uracil. It catalyses the reaction xanthosine + phosphate = alpha-D-ribose 1-phosphate + xanthine. Its function is as follows. Catalyzes the phosphorolysis of diverse nucleosides, yielding D-ribose 1-phosphate and the respective free bases. Can use uridine, adenosine, guanosine, cytidine, thymidine, inosine and xanthosine as substrates. Also catalyzes the reverse reactions. This is Pyrimidine/purine nucleoside phosphorylase from Teredinibacter turnerae (strain ATCC 39867 / T7901).